A 238-amino-acid chain; its full sequence is Lipoarabinomannan carrier protein LprG (238 aa).

The N-terminal stretch at Met-1–Gly-26 is a signal peptide. Cys-27 carries N-palmitoyl cysteine lipidation. The S-diacylglycerol cysteine moiety is linked to residue Cys-27.

The protein belongs to the LppX/LprAFG lipoprotein family. In terms of processing, modified by Lgt on Cys-27 with an S-linked diacylglyceral, signal peptide is removed by LspA, Cys-27 is further modifed with a fatty acid on its amino group by Lnt yielding a triacylated protein. Probably glycosylated, which is required for T-cell activation.

Its subcellular location is the cell inner membrane. The protein localises to the secreted. It localises to the cell wall. Helps membrane protein ML0556 (P55) transport triacylglycerides (TAG) across the inner cell membrane into the periplasm and probably ultimately to the outer membrane. Binds TAG in its hydrophobic cavity and transfers it between lipid bilayers. TAG probably regulates lipid metabolism and growth regulation and plays a structural role in the outer membrane. Binds di- and triacylated phosphatidyl-myo-inositol mannosides (PIMs), and glycolipid lipoglycan modulins lipoarabinomannan (LAM) and lipomannan (LM), facilitating their recognition by TLR2. Required for activity of drug efflux transporter ML0556. Required, probably with ML0556, for normal surface localization of LAM. Its function is as follows. Constitutes a host TLR2 agonist (toll-like receptor) able to stimulate proliferation of CD4+ T-cells derived from a human leprosy patient following protein processing/presentation by MHC class II molecules in peripheral blood mononuclear cells. This is Lipoarabinomannan carrier protein LprG from Mycobacterium leprae (strain TN).